The following is a 313-amino-acid chain: Solute carrier family 35 member E3 (313 aa).

Helical transmembrane passes span 17-37, 40-60, 77-97, 100-120, 130-147, 153-173, 187-206, 225-245, 252-272, and 275-295; these read GLLL…WIYV, GFPN…GLYV, LLLL…SLQN, IGTY…IQTL, IRLT…NSYY, FLGT…QVWV, LLYY…VPFF, LMVL…YWII, TYNM…YVLF, and PLSI…LAYT.

Belongs to the TPT transporter family. SLC35E subfamily.

The protein localises to the membrane. In terms of biological role, putative transporter. The sequence is that of Solute carrier family 35 member E3 (SLC35E3) from Bos taurus (Bovine).